Reading from the N-terminus, the 476-residue chain is Glycogen synthase (476 aa).

Residue Lys-15 coordinates ADP-alpha-D-glucose.

This sequence belongs to the glycosyltransferase 1 family. Bacterial/plant glycogen synthase subfamily.

The catalysed reaction is [(1-&gt;4)-alpha-D-glucosyl](n) + ADP-alpha-D-glucose = [(1-&gt;4)-alpha-D-glucosyl](n+1) + ADP + H(+). The protein operates within glycan biosynthesis; glycogen biosynthesis. Functionally, synthesizes alpha-1,4-glucan chains using ADP-glucose. This Marinomonas sp. (strain MWYL1) protein is Glycogen synthase.